Reading from the N-terminus, the 185-residue chain is Fimbrial subunit type 1 (185 aa).

The N-terminal stretch at 1–22 (MRHKLMTSTIASLMFVAAAAVA) is a signal peptide. Cysteines 46 and 86 form a disulfide.

Belongs to the fimbrial protein family.

Its subcellular location is the fimbrium. The sequence is that of Fimbrial subunit type 1 from Salmonella typhimurium.